An 882-amino-acid polypeptide reads, in one-letter code: Putative HTH-type transcriptional regulator Mb0914c (882 aa).

The HTH luxR-type domain maps to 814-879 (PARGWGSLTP…QLVDEAARRG (66 aa)). Positions 838–857 (NKDIAKRLFVSPRTVQTHLT) form a DNA-binding region, H-T-H motif.

The polypeptide is Putative HTH-type transcriptional regulator Mb0914c (Mycobacterium bovis (strain ATCC BAA-935 / AF2122/97)).